The chain runs to 838 residues: Leucine--tRNA ligase (838 aa).

A 'HIGH' region motif is present at residues 38–48 (PYPSGKAHVGH). A 'KMSKS' region motif is present at residues 608 to 612 (KMSKS). ATP is bound at residue lysine 611.

Belongs to the class-I aminoacyl-tRNA synthetase family.

The protein resides in the cytoplasm. The catalysed reaction is tRNA(Leu) + L-leucine + ATP = L-leucyl-tRNA(Leu) + AMP + diphosphate. This Orientia tsutsugamushi (strain Boryong) (Rickettsia tsutsugamushi) protein is Leucine--tRNA ligase.